Consider the following 956-residue polypeptide: MSSGLWSQDKVTSPYWEERVFYLLLQECSVTDKQTQKLLKVPKGSIGQYIQDRSVGHSRIPSAKGKKNRIGLKILEQPHAVLFVDEKDVVEINEKFTELLLAITNCEERFSLFKNRNRLSKGLQIDVGCPVKVQLRSGEEKFPGVVRFRGPLLAERTVSGIFFGVELLEEGRGQGFTDGVYQGKQLFQCDEDCGVFVALDKLELIEDDDTALESDYAGPGDTMQVELPPLEINSRVSLKVGETIESGTVIFCDVLPGKESLGYFVGVDMDNPIGNWDGRFDGVQLCSFACVESTILLHINDIIPALSESVTQERRPPKLAFMSRGVGDKGSSSHNKPKATGSTSDPGNRNRSELFYTLNGSSVDSQPQSKSKNTWYIDEVAEDPAKSLTEISTDFDRSSPPLQPPPVNSLSTENRFHSLPFSLTKMPNTNGSIGHSPLSLSAQSVMEELNTAPVQESPPLAMPPGNSHGLEVGSLAEVKENPPFYGVIRWIGQPPGLNEVLAGLELEDECAGCTDGTFRGTRYFTCALKKALFVKLKSCRPDSRFASLQPVSNQIERCNSLAFGGYLSEVVEENTPPKMEKEGLEIMIGKKKGIQGHYNSCYLDSTLFCLFAFSSVLDTVLLRPKEKNDVEYYSETQELLRTEIVNPLRIYGYVCATKIMKLRKILEKVEAASGFTSEEKDPEEFLNILFHHILRVEPLLKIRSAGQKVQDCYFYQIFMEKNEKVGVPTIQQLLEWSFINSNLKFAEAPSCLIIQMPRFGKDFKLFKKIFPSLELNITDLLEDTPRQCRICGGLAMYECRECYDDPDISAGKIKQFCKTCNTQVHLHPKRLNHKYNPVSLPKDLPDWDWRHGCIPCQNMELFAVLCIETSHYVAFVKYGKDDSAWLFFDSMADRDGGQNGFNIPQVTPCPEVGEYLKMSLEDLHSLDSRRIQGCARRLLCDAYMCMYQSPTMSLYK.

The interval 106-593 (CEERFSLFKN…LEIMIGKKKG (488 aa)) is interaction with TRIP. CAP-Gly domains are found at residues 153–198 (LAER…VFVA) and 253–286 (DVLP…VQLC). The tract at residues 309–353 (SVTQERRPPKLAFMSRGVGDKGSSSHNKPKATGSTSDPGNRNRSE) is disordered. The span at 330-349 (GSSSHNKPKATGSTSDPGNR) shows a compositional bias: polar residues. Ser-387 bears the Phosphoserine mark. A disordered region spans residues 392–411 (STDFDRSSPPLQPPPVNSLS). The interval 394–469 (DFDRSSPPLQ…LAMPPGNSHG (76 aa)) is interaction with TRAF2. Ser-418 and Ser-422 each carry phosphoserine. An interaction with IKBKG/NEMO region spans residues 470-684 (LEVGSLAEVK…FTSEEKDPEE (215 aa)). Residues 492 to 535 (GQPPGLNEVLAGLELEDECAGCTDGTFRGTRYFTCALKKALFVK) enclose the CAP-Gly 3 domain. A USP domain is found at 592-950 (KGIQGHYNSC…DAYMCMYQSP (359 aa)). Catalysis depends on Cys-601, which acts as the Nucleophile. Residues 781-833 (LEDTPRQCRICGGLAMYECRECYDDPDISAGKIKQFCKTCNTQVHLHPKRLNH) are B-box. Positions 788, 791, 799, 802, 817, 820, 825, and 833 each coordinate Zn(2+). The active-site Proton acceptor is the His-871.

It belongs to the peptidase C19 family. As to quaternary structure, interacts (via CAP-Gly domain) with IKBKG/NEMO (via proline-rich C-terminal region). Interacts with TRAF2 and TRIP. Interacts with PLK1, DVL1, DVL3, MAVS, TBK1, IKKE and RIGI. Interacts (via CAP-Gly domain) with microtubules. Interacts with HDAC6 and BCL3. Interacts with MAP3K7. Identified in a complex with TRAF6 and SQSTM1. Interacts with OPTN and SQSTM1. Interacts with CEP350. Interacts with RNF31; the interaction is indirect and is mediated via SPATA2. Interacts with SPATA2 (via the PUB domain); the interaction is direct and recruits CYLD to the LUBAC complex, thereby regulating TNF-alpha-induced necroptosis. In terms of processing, phosphorylated on several serine residues by IKKA and/or IKKB in response to immune stimuli. Phosphorylation requires IKBKG. Phosphorylation abolishes TRAF2 deubiquitination, interferes with the activation of Jun kinases, and strongly reduces CD40-dependent gene activation by NF-kappa-B. Ubiquitinated. Polyubiquitinated in hepatocytes treated with palmitic acid. Ubiquitination is mediated by E3 ligase TRIM47 and leads to proteasomal degradation.

Its subcellular location is the cytoplasm. It localises to the perinuclear region. The protein resides in the cytoskeleton. It is found in the cell membrane. The protein localises to the microtubule organizing center. Its subcellular location is the centrosome. It localises to the spindle. The protein resides in the cilium basal body. The enzyme catalyses Thiol-dependent hydrolysis of ester, thioester, amide, peptide and isopeptide bonds formed by the C-terminal Gly of ubiquitin (a 76-residue protein attached to proteins as an intracellular targeting signal).. Its function is as follows. Deubiquitinase that specifically cleaves 'Lys-63'- and linear 'Met-1'-linked polyubiquitin chains and is involved in NF-kappa-B activation and TNF-alpha-induced necroptosis. Negatively regulates NF-kappa-B activation by deubiquitinating upstream signaling factors. Contributes to the regulation of cell survival, proliferation and differentiation via its effects on NF-kappa-B activation. Negative regulator of Wnt signaling. Inhibits HDAC6 and thereby promotes acetylation of alpha-tubulin and stabilization of microtubules. Plays a role in the regulation of microtubule dynamics, and thereby contributes to the regulation of cell proliferation, cell polarization, cell migration, and angiogenesis. Required for normal cell cycle progress and normal cytokinesis. Inhibits nuclear translocation of NF-kappa-B. Plays a role in the regulation of inflammation and the innate immune response, via its effects on NF-kappa-B activation. Dispensable for the maturation of intrathymic natural killer cells, but required for the continued survival of immature natural killer cells. Negatively regulates TNFRSF11A signaling and osteoclastogenesis. Involved in the regulation of ciliogenesis, allowing ciliary basal bodies to migrate and dock to the plasma membrane; this process does not depend on NF-kappa-B activation. Ability to remove linear ('Met-1'-linked) polyubiquitin chains regulates innate immunity and TNF-alpha-induced necroptosis: recruited to the LUBAC complex via interaction with SPATA2 and restricts linear polyubiquitin formation on target proteins. Regulates innate immunity by restricting linear polyubiquitin formation on RIPK2 in response to NOD2 stimulation. Involved in TNF-alpha-induced necroptosis by removing linear ('Met-1'-linked) polyubiquitin chains from RIPK1, thereby regulating the kinase activity of RIPK1. Negatively regulates intestinal inflammation by removing 'Lys-63' linked polyubiquitin chain of NLRP6, thereby reducing the interaction between NLRP6 and PYCARD/ASC and formation of the NLRP6 inflammasome. Does not catalyze deubiquitination of heterotypic 'Lys-63'-/'Lys-48'-linked branched ubiquitin chains. Removes 'Lys-63' linked polyubiquitin chain of MAP3K7, which inhibits phosphorylation and blocks downstream activation of the JNK-p38 kinase cascades. Also removes 'Lys-63'-linked polyubiquitin chains of MAP3K1 and MA3P3K3, which inhibit their interaction with MAP2K1 and MAP2K2. The protein is Ubiquitin carboxyl-terminal hydrolase CYLD (CYLD) of Pongo abelii (Sumatran orangutan).